The primary structure comprises 180 residues: Oligoribonuclease (180 aa).

One can recognise an Exonuclease domain in the interval 7–170; it reads LIWIDLEMTG…SDIQDSIDEL (164 aa). The active site involves Y128.

The protein belongs to the oligoribonuclease family.

Its subcellular location is the cytoplasm. Its function is as follows. 3'-to-5' exoribonuclease specific for small oligoribonucleotides. The chain is Oligoribonuclease from Ruthia magnifica subsp. Calyptogena magnifica.